The chain runs to 311 residues: tRNA-cytidine(32) 2-sulfurtransferase (311 aa).

Residues 47-52 (SGGKDS) carry the PP-loop motif motif. Residues cysteine 122, cysteine 125, and cysteine 213 each coordinate [4Fe-4S] cluster.

The protein belongs to the TtcA family. Homodimer. It depends on Mg(2+) as a cofactor. The cofactor is [4Fe-4S] cluster.

It is found in the cytoplasm. The enzyme catalyses cytidine(32) in tRNA + S-sulfanyl-L-cysteinyl-[cysteine desulfurase] + AH2 + ATP = 2-thiocytidine(32) in tRNA + L-cysteinyl-[cysteine desulfurase] + A + AMP + diphosphate + H(+). The protein operates within tRNA modification. Functionally, catalyzes the ATP-dependent 2-thiolation of cytidine in position 32 of tRNA, to form 2-thiocytidine (s(2)C32). The sulfur atoms are provided by the cysteine/cysteine desulfurase (IscS) system. This chain is tRNA-cytidine(32) 2-sulfurtransferase, found in Escherichia coli O1:K1 / APEC.